We begin with the raw amino-acid sequence, 615 residues long: MNNLIKSKLELLPTSPGCYIHKDKNGSIIYVGKAKNLRNRVRSYFRGSHDTKTEALVSEIVDFEFIVTESNIEALLLEINLIKENKPKYNIMLKDDKSYPFIKITNERYPRLIITRQVKKDGGLYFGPYPDVGAANEIKRLLDRIFPFRKCTNPPSKVCFYYHIGQCMAHTICKKDEAYFKSMAQEVSDFLKGQDNKIIDELKGKMAAAAQTMEFERAAEYRDLIQAIGTLRTKQRVMAKDLQNRDVFGYYVDKGWMCVQVFFVRQGKLIERDVNLFPYFNDPDEDFLTYVGQFYQEKSHLVPNEVLIPQDIDEEAVKALVDTKILKPQRGEKKQLVNLAIKNARVSLEQKFNLLEKSVEKTQGAIENLGRLLQIPTPVRIESFDNSNIMGTSPVSAMVVFVNGRPSKKDYRKYKIKTVVGPDDYASMREVIRRRYGRVQREALTPPDLIVIDGGQGQVNIAKQVIQEELGLDIPIAGLQKNDKHQTHELLFGDPLEVVDLSRNSQEFFLLQRIQDEVHRFAITFHRQLRSKNSFSSQLDGIDGLGPKRKQNLMRHFKSLTKIKEASVDEIVEVGVPRAVAEAVQTKLNPQETEILLQVAEERVDYQTEGNHNKP.

The region spanning 14–91 (TSPGCYIHKD…IKENKPKYNI (78 aa)) is the GIY-YIG domain. In terms of domain architecture, UVR spans 196 to 231 (NKIIDELKGKMAAAAQTMEFERAAEYRDLIQAIGTL).

The protein belongs to the UvrC family. Interacts with UvrB in an incision complex.

Its subcellular location is the cytoplasm. Functionally, the UvrABC repair system catalyzes the recognition and processing of DNA lesions. UvrC both incises the 5' and 3' sides of the lesion. The N-terminal half is responsible for the 3' incision and the C-terminal half is responsible for the 5' incision. In Streptococcus pneumoniae (strain JJA), this protein is UvrABC system protein C.